A 294-amino-acid chain; its full sequence is Bifunctional protein FolD (294 aa).

NADP(+)-binding positions include 164–166 (GRS), serine 193, and isoleucine 234.

The protein belongs to the tetrahydrofolate dehydrogenase/cyclohydrolase family. Homodimer.

It carries out the reaction (6R)-5,10-methylene-5,6,7,8-tetrahydrofolate + NADP(+) = (6R)-5,10-methenyltetrahydrofolate + NADPH. The catalysed reaction is (6R)-5,10-methenyltetrahydrofolate + H2O = (6R)-10-formyltetrahydrofolate + H(+). Its pathway is one-carbon metabolism; tetrahydrofolate interconversion. Catalyzes the oxidation of 5,10-methylenetetrahydrofolate to 5,10-methenyltetrahydrofolate and then the hydrolysis of 5,10-methenyltetrahydrofolate to 10-formyltetrahydrofolate. The polypeptide is Bifunctional protein FolD (Flavobacterium psychrophilum (strain ATCC 49511 / DSM 21280 / CIP 103535 / JIP02/86)).